Consider the following 158-residue polypeptide: Transcription elongation factor GreA (158 aa).

This sequence belongs to the GreA/GreB family.

Its function is as follows. Necessary for efficient RNA polymerase transcription elongation past template-encoded arresting sites. The arresting sites in DNA have the property of trapping a certain fraction of elongating RNA polymerases that pass through, resulting in locked ternary complexes. Cleavage of the nascent transcript by cleavage factors such as GreA or GreB allows the resumption of elongation from the new 3'terminus. GreA releases sequences of 2 to 3 nucleotides. The polypeptide is Transcription elongation factor GreA (Yersinia pestis).